The chain runs to 874 residues: Alanine--tRNA ligase (874 aa).

Zn(2+) contacts are provided by H564, H568, C665, and H669.

Belongs to the class-II aminoacyl-tRNA synthetase family. The cofactor is Zn(2+).

It localises to the cytoplasm. It carries out the reaction tRNA(Ala) + L-alanine + ATP = L-alanyl-tRNA(Ala) + AMP + diphosphate. Catalyzes the attachment of alanine to tRNA(Ala) in a two-step reaction: alanine is first activated by ATP to form Ala-AMP and then transferred to the acceptor end of tRNA(Ala). Also edits incorrectly charged Ser-tRNA(Ala) and Gly-tRNA(Ala) via its editing domain. The polypeptide is Alanine--tRNA ligase (Burkholderia pseudomallei (strain 1106a)).